Here is a 471-residue protein sequence, read N- to C-terminus: MLPSWTIGLLLLATVRGKEICYQPFGCFSDETPWARTCHWPFKLFPWAPKDIDTHFLLYTNENPNNFQLINITNLDTIEASNFQLDRKTRFIIHGFIDKGEDSWPSEMCKKMFKVEKVNCICVDWRRGALTRYTQAVHNTRVVGAEIAFLIQGLSTKFDYNPENVHLIGHSLGAHTAAEAGRRLGGHVGRLTGLDPAQPCFQNTPEEVRLDPSDAMFVDVIHTDSAPFIPFLGFGMSQKVGHLDFYPNGGKEMPGCQKNTLSTIVDVDGIWEGIEDFAACNHLRSYKYYSSSIFSPDGFLGYPCASYDEFQEEENKCFPCPAEGCPKMGHYADQFQGKTSAVGQTFFLNTGDSGNFTRWRYRVSVTLAGKRNVHGYIRIALYGSNANSKQYNIFKGSLQPNARYTHDIDVDLNVGKVQKVKFLWYNHIIDLFHPELGASQVMVQSGEDKTEHKFCGSDTVRENILQTLNPC.

Positions 1 to 17 (MLPSWTIGLLLLATVRG) are cleaved as a signal peptide. C21 and C27 are joined by a disulfide. Residue N71 is glycosylated (N-linked (GlcNAc...) asparagine). The required for galactolipase activity stretch occupies residues 93 to 105 (IHGFIDKGEDSWP). C109 and C120 are oxidised to a cystine. The Nucleophile role is filled by S171. D195 (charge relay system) is an active-site residue. Ca(2+) is bound by residues E206, R209, D211, and D214. A disulfide bond links C256 and C280. The tract at residues 257 to 279 (QKNTLSTIVDVDGIWEGIEDFAA) is required for galactolipase activity. The active-site Charge relay system is H282. 2 disulfides stabilise this stretch: C304–C317 and C320–C325. The N-linked (GlcNAc...) asparagine glycan is linked to N355. Residues 359-471 (WRYRVSVTLA…ENILQTLNPC (113 aa)) enclose the PLAT domain. The cysteines at positions 455 and 471 are disulfide-linked.

This sequence belongs to the AB hydrolase superfamily. Lipase family.

The protein resides in the secreted. It localises to the zymogen granule membrane. Its subcellular location is the cell projection. The protein localises to the neuron projection. It carries out the reaction a triacylglycerol + H2O = a diacylglycerol + a fatty acid + H(+). The enzyme catalyses a 1,2-diacyl-3-O-(beta-D-galactosyl)-sn-glycerol + 2 H2O = 3-beta-D-galactosyl-sn-glycerol + 2 a fatty acid + 2 H(+). The catalysed reaction is 1,2,3-tri-(9Z-octadecenoyl)-glycerol + H2O = di-(9Z)-octadecenoylglycerol + (9Z)-octadecenoate + H(+). It catalyses the reaction di-(9Z)-octadecenoylglycerol + H2O = (9Z-octadecenoyl)-glycerol + (9Z)-octadecenoate + H(+). It carries out the reaction (9Z-octadecenoyl)-glycerol + H2O = glycerol + (9Z)-octadecenoate + H(+). The enzyme catalyses 1-(9Z-octadecenoyl)-glycerol + H2O = glycerol + (9Z)-octadecenoate + H(+). The catalysed reaction is 1,2,3-tripropanoylglycerol + H2O = dipropanoylglycerol + propanoate + H(+). It catalyses the reaction 1,2,3-tributanoylglycerol + H2O = dibutanoylglycerol + butanoate + H(+). It carries out the reaction 1,2,3-trioctanoylglycerol + H2O = dioctanoylglycerol + octanoate + H(+). The enzyme catalyses 1,2-didecanoylglycerol + H2O = decanoylglycerol + decanoate + H(+). The catalysed reaction is long chain 1,2-diacyl-3-O-beta-D-galactosyl-sn-glycerol + H2O = long chain acyl-3-O-beta-D-galactosyl-sn-glycerol + a fatty acid + H(+). It catalyses the reaction 1,2-dioctanoyl-3-O-beta-D-galactosyl-sn-glycerol + H2O = octanoyl-3-(beta-D-galactosyl)-sn-glycerol + octanoate + H(+). It carries out the reaction 1,2-didodecanoyl-3-beta-D-galactosyl-sn-glycerol + H2O = dodecanoyl-3-beta-D-galactosyl-sn-glycerol + dodecanoate + H(+). The enzyme catalyses 1-beta-D-galactosyl-2,3-didodecanoyl-sn-glycerol + H2O = 1-beta-D-galactosyl-dodecanoyl-sn-glycerol + dodecanoate + H(+). The catalysed reaction is a 1,2-diacyl-3-O-[alpha-D-galactosyl-(1-&gt;6)-beta-D-galactosyl]-sn-glycerol + H2O = acyl-3-O-[alpha-D-galactosyl-(1-&gt;6)-beta-D-galactosyl]-sn-glycerol + a fatty acid + H(+). It catalyses the reaction long chain 1,2-diacyl-3-O-[alpha-D-galactosyl-(1-&gt;6)-beta-D-galactosyl]-sn-glycerol + H2O = long chain acyl-3-O-[alpha-D-galactosyl-(1-&gt;6)-beta-D-galactosyl]-sn-glycerol + a fatty acid + H(+). It carries out the reaction 1,2-dioctanoyl-3-O-[alpha-D-galactosyl-(1-&gt;6)-beta-D-galactosyl]-sn-glycerol + H2O = octanoyl-3-O-[alpha-D-galactosyl-(1-&gt;6)-beta-D-galactosyl]-sn-glycerol + octanoate + H(+). The enzyme catalyses 1,2-didodecanoyl-3-O-[alpha-D-galactosyl-(1-&gt;6)-beta-D-galactosyl]-sn-glycerol + H2O = dodecanoyl-3-O-[alpha-D-galactosyl-(1-&gt;6)-beta-D-galactosyl]-sn-glycerol + dodecanoate + H(+). The catalysed reaction is a 1,2-diacyl-sn-glycero-3-phosphocholine + H2O = a monoacyl-sn-glycero-3-phosphocholine + a fatty acid + H(+). It functions in the pathway glycerolipid metabolism; triacylglycerol degradation. The protein operates within glycolipid metabolism. Its activity is regulated as follows. Up-regulated by CLPS in the presence of increasing concentrations of bile salts. Lipase that primarily hydrolyzes triglycerides and galactosylglycerides. In neonates, may play a major role in pancreatic digestion of dietary fats such as milk fat globules enriched in long-chain triglycerides. Hydrolyzes short-, medium- and long-chain fatty acyls in triglycerides without apparent positional specificity. Can completely deacylate triacylglycerols. When the liver matures and bile salt synthesis increases, likely functions mainly as a galactolipase and monoacylglycerol lipase. Hydrolyzes monogalactosyldiglycerols (MGDG) and digalactosyldiacylglycerols (DGDG) present in a plant-based diet, releasing long-chain polyunsaturated fatty acids. Hydrolyzes medium- and long-chain fatty acyls in galactolipids. May act together with LIPF to hydrolyze partially digested triglycerides. Hydrolyzes long-chain monoglycerides with high efficiency. In cytotoxic T cells, contributes to perforin-dependent cell lysis, but is unlikely to mediate direct cytotoxicity. Also has low phospholipase activity. In neurons, required for the localization of the phospholipid 1-oleoyl-2-palmitoyl-PC (OPPC) to neurite tips through acyl chain remodeling of membrane phospholipids. The resulting OPPC-rich lipid membrane domain recruits the t-SNARE protein STX4 by selectively interacting with the STX4 transmembrane domain and this promotes surface expression of the dopamine transporter SLC6A3/DAT at neurite tips by facilitating fusion of SLC6A3-containing transport vesicles with the plasma membrane. The chain is Pancreatic lipase-related protein 2 (PNLIPRP2) from Sus scrofa (Pig).